We begin with the raw amino-acid sequence, 436 residues long: CaM kinase-like vesicle-associated protein (436 aa).

Residues 24 to 286 enclose the Protein kinase domain; that stretch reads YDLGQIVKSE…AQEAINHEWI (263 aa). Residues 328–436 are disordered; that stretch reads APENQTAAAT…ALDTVEEQSG (109 aa). Over residues 333–409 the composition is skewed to low complexity; sequence TAAATAPAAE…QPPAEPVVHV (77 aa).

It belongs to the protein kinase superfamily. CAMK Ser/Thr protein kinase family. Interacts with calmodulin, in the presence of calcium. Ca(2+) serves as cofactor.

The protein resides in the cytoplasmic vesicle membrane. Does not appear to have detectable kinase activity. The protein is CaM kinase-like vesicle-associated protein (camkv) of Danio rerio (Zebrafish).